We begin with the raw amino-acid sequence, 443 residues long: Thymidine phosphorylase (443 aa).

The protein belongs to the thymidine/pyrimidine-nucleoside phosphorylase family. As to quaternary structure, homodimer.

It catalyses the reaction thymidine + phosphate = 2-deoxy-alpha-D-ribose 1-phosphate + thymine. Its pathway is pyrimidine metabolism; dTMP biosynthesis via salvage pathway; dTMP from thymine: step 1/2. In terms of biological role, the enzymes which catalyze the reversible phosphorolysis of pyrimidine nucleosides are involved in the degradation of these compounds and in their utilization as carbon and energy sources, or in the rescue of pyrimidine bases for nucleotide synthesis. The sequence is that of Thymidine phosphorylase from Shewanella pealeana (strain ATCC 700345 / ANG-SQ1).